The following is a 545-amino-acid chain: Periplasmic trehalase (545 aa).

The first 30 residues, 1–30 (MPDRTALPRAMLAAWVLLLLAACSQGPAPT), serve as a signal peptide directing secretion. Residues Arg160, 167 to 168 (WD), Asn204, 213 to 215 (RSQ), 285 to 287 (RQE), and Gly318 each bind substrate. Catalysis depends on proton donor/acceptor residues Asp320 and Glu503. Glu518 contacts substrate.

The protein belongs to the glycosyl hydrolase 37 family.

It localises to the periplasm. It carries out the reaction alpha,alpha-trehalose + H2O = alpha-D-glucose + beta-D-glucose. Functionally, provides the cells with the ability to utilize trehalose at high osmolarity by splitting it into glucose molecules that can subsequently be taken up by the phosphotransferase-mediated uptake system. This is Periplasmic trehalase from Pseudomonas aeruginosa (strain ATCC 15692 / DSM 22644 / CIP 104116 / JCM 14847 / LMG 12228 / 1C / PRS 101 / PAO1).